The chain runs to 1553 residues: MSEQTPAEAGAAGAREDACRDYQSSLEDLTFNSKPHINMLTILAEENLPFAKEIVSLIEAQTAKAPSSEKLPVMYLMDSIVKNVGREYLTAFTKNLVATFICVFEKVDENTRKSLFKLRSTWDEIFPLKKLYALDVRVNSLDPAWPIKPLPPNVNTSSIHVNPKFLNKSPDEPSTPGTVVSSPSISTPPIVPDIQKNLTQEQLIRQQLLAKQKQLLELQQKKLELELEQAKAQLAVSLSVQQETANLGPGSVPSKLHVPQIPTMAVKTPHQVPVQPDKSRAGPSLQMQDLKGTNRDPRLNRMSQHSSHGKEQSHRKEFVMNTINQSDIKTSKNVPSEKLNSSKQEKSKSGERITKKELDQLDSKSKSKSKSPSPLKNKLSHTKDLKNQDSESMRLSDMSKRDPRLKKHLQDKAEGKDEDVKEKRKTAEKKEKDEHMKSSEHRVIGSRSKIINGIVQKQDMVTEELEKQGTKPGRSSTRKRSRSRSPKSRSPIIHSPKRRDRRSPKRRQRSMSPNLAPKAGKMRQSGLKQSHMEEFPPPSREERNIKRSAKQDVRDPRRLKKMDEDRPQETAGQHSMKSGGDPKENIENWQSSKSAKRWKSGWEENKSLQQGDEHSKPPHLRHRESWSSTKGILSPRAPKQQHRLSVDANLQIPKELTLASKRELLQKTSERLASGEITQDEFLVVVHQIRQLFQYQEGVREEQRSPFNDRFPLKRPRYEDSDKPFVDGPASRFAGLDTNQRLTALAEDRPLFDGPGRPSVTRDGPAKMIFEGPNKLSPRIDGPPTPGSLRFDGSPGQMGGGGPMRFEGPQGQLGGGCPLRFEGPPGPVGTPLRFEGPIGQGGGGGFRFEGSPSLRFEGSTGGLRFEGPGGQPVGGLRFEGHRGQPVGGLRFEGPHGQPVGSLRFDNPRGQPVGGLRFEGGHGPSGAAIRFDGPHGQPGGGGGIRFEGPLLQQGVGMRFEGPHGQSVAGLRFEGHNQLGGNLRFEGPHGQPGVGIRFEGPIVQQGGGMRFEGPVPGGGLRIEGPLGQGGPRFEGCHSLRFDGQPGQPSLLPRFDGLHGQPGPRFERTGQPGPQRFDGPPGQQVQPRFDGVPQRFDGPQHQQASRFDIPLGLQGTRFDNHPSQRIESFNHSGPYNDPPGNTFNVPSQGLQFQRHEQIFDTPQGPNFNGPHGPGNQNFPNPINRASGHYFDEKNLQSSQFGNFGNLPTPISVGNIQASQQVLTGVAQPVAFGQGQQFLPVHPQNPGAFIQNPSGGLPKAYPDNHLSQVDVNELFSKLLKTGILKLSQPDSATAQVTEAVAQPPPEEDEDQNEDQDVPDLTNFTIEELKQRYDSVINRLYTGIQCYSCGMRFTTSQTDVYADHLDWHYRQNRTEKDVSRKVTHRRWYYSLTDWIEFEEIADLEERAKSQFFEKVHEEVVLKTQEAAKEKEFQSVPAGPAGAVESCEICQEQFEQYWDEEEEEWHLKNAIRVDGKIYHPSCYEDYQNTSSFDCTPSPSKTPVENPLNIMLNIVKNELQEPCESPKVKEEQIDAPPACSEESVATPTEIKTESDTVESV.

Serine 2 is modified (N-acetylserine). Residues 14-142 (AREDACRDYQ…ALDVRVNSLD (129 aa)) enclose the CID domain. At serine 120 the chain carries Phosphoserine. Position 121 is a phosphothreonine (threonine 121). A disordered region spans residues 167-186 (NKSPDEPSTPGTVVSSPSIS). 2 positions are modified to phosphoserine: serine 169 and serine 182. A compositionally biased stretch (low complexity) spans 174–186 (STPGTVVSSPSIS). Positions 208–235 (LLAKQKQLLELQQKKLELELEQAKAQLA) form a coiled coil. The segment at 265–648 (AVKTPHQVPV…KQQHRLSVDA (384 aa)) is disordered. Lysine 291 participates in a covalent cross-link: Glycyl lysine isopeptide (Lys-Gly) (interchain with G-Cter in SUMO2). The span at 308–318 (HGKEQSHRKEF) shows a compositional bias: basic and acidic residues. Polar residues predominate over residues 321-342 (NTINQSDIKTSKNVPSEKLNSS). Residue lysine 329 forms a Glycyl lysine isopeptide (Lys-Gly) (interchain with G-Cter in SUMO2) linkage. Composition is skewed to basic and acidic residues over residues 343-365 (KQEK…DSKS), 381-422 (HTKD…DVKE), and 428-443 (EKKE…EHRV). Lysine 457 is covalently cross-linked (Glycyl lysine isopeptide (Lys-Gly) (interchain with G-Cter in SUMO2)). A compositionally biased stretch (basic residues) spans 476 to 487 (STRKRSRSRSPK). A phosphoserine mark is found at serine 490, serine 495, serine 510, and serine 512. The segment covering 495-509 (SPKRRDRRSPKRRQR) has biased composition (basic residues). Composition is skewed to basic and acidic residues over residues 530-568 (SHME…DRPQ) and 600-616 (SGWE…EHSK). Position 645 is a phosphoserine (serine 645). Residue lysine 654 forms a Glycyl lysine isopeptide (Lys-Gly) (interchain with G-Cter in SUMO2) linkage. Serine 705 carries the post-translational modification Phosphoserine. Residues 707–733 (FNDRFPLKRPRYEDSDKPFVDGPASRF) form a disordered region. Positions 716-725 (PRYEDSDKPF) are enriched in basic and acidic residues. Residue lysine 723 forms a Glycyl lysine isopeptide (Lys-Gly) (interchain with G-Cter in SUMO2) linkage. Phosphoserine is present on serine 777. Threonine 785 bears the Phosphothreonine mark. Serine 794 carries the phosphoserine modification. Residues arginine 805, arginine 820, and arginine 833 each carry the asymmetric dimethylarginine modification. A Phosphoserine modification is found at serine 851. Positions 921 to 940 (HGPSGAAIRFDGPHGQPGGG) are disordered. Asymmetric dimethylarginine is present on residues arginine 929, arginine 944, arginine 957, arginine 982, arginine 995, arginine 1008, arginine 1092, and arginine 1103. Residue lysine 1276 forms a Glycyl lysine isopeptide (Lys-Gly) (interchain with G-Cter in SUMO2) linkage. Residues 1286–1313 (DSATAQVTEAVAQPPPEEDEDQNEDQDV) form a disordered region. The span at 1301–1313 (PEEDEDQNEDQDV) shows a compositional bias: acidic residues. Glycyl lysine isopeptide (Lys-Gly) (interchain with G-Cter in SUMO2) cross-links involve residues lysine 1417, lysine 1509, lysine 1522, and lysine 1544. Positions 1516 to 1553 (CESPKVKEEQIDAPPACSEESVATPTEIKTESDTVESV) are disordered.

In terms of assembly, associates with the phosphorylated CTD domain of POLR2A /RNA polymerase II. Post-translationally, phosphorylation at Ser-120 and/or Thr-121 by WNK1 weakens its association with POLR2A/RNA polymerase II, promoting transcript release from the chromatin template and mRNA export to the cytoplasm.

The protein localises to the nucleus. In terms of biological role, component of pre-mRNA cleavage complex II, which promotes transcription termination by RNA polymerase II. The polypeptide is Pre-mRNA cleavage complex 2 protein Pcf11 (Mus musculus (Mouse)).